The primary structure comprises 69 residues: DNA-directed RNA polymerase subunit omega (69 aa).

This sequence belongs to the RNA polymerase subunit omega family. As to quaternary structure, the RNAP catalytic core consists of 2 alpha, 1 beta, 1 beta' and 1 omega subunit. When a sigma factor is associated with the core the holoenzyme is formed, which can initiate transcription.

It carries out the reaction RNA(n) + a ribonucleoside 5'-triphosphate = RNA(n+1) + diphosphate. In terms of biological role, promotes RNA polymerase assembly. Latches the N- and C-terminal regions of the beta' subunit thereby facilitating its interaction with the beta and alpha subunits. The polypeptide is DNA-directed RNA polymerase subunit omega (Carboxydothermus hydrogenoformans (strain ATCC BAA-161 / DSM 6008 / Z-2901)).